The sequence spans 103 residues: Histone H4 (103 aa).

Positions 1 to 14 (MTGRGKGGKGLGKG) are enriched in gly residues. The disordered stretch occupies residues 1–20 (MTGRGKGGKGLGKGGAKRHR). An N6-acetyl-N6-methyllysine; alternate mark is found at K6 and K13. A DNA-binding region spans residues 17–21 (KRHRK).

This sequence belongs to the histone H4 family. The nucleosome is a histone octamer containing two molecules each of H2A, H2B, H3 and H4 assembled in one H3-H4 heterotetramer and two H2A-H2B heterodimers. The octamer wraps approximately 147 bp of DNA.

Its subcellular location is the nucleus. It localises to the chromosome. Functionally, core component of nucleosome. Nucleosomes wrap and compact DNA into chromatin, limiting DNA accessibility to the cellular machineries which require DNA as a template. Histones thereby play a central role in transcription regulation, DNA repair, DNA replication and chromosomal stability. DNA accessibility is regulated via a complex set of post-translational modifications of histones, also called histone code, and nucleosome remodeling. The sequence is that of Histone H4 from Diadromus pulchellus (Parasitic wasp).